The following is a 330-amino-acid chain: Mas-related G-protein coupled receptor member X2 (330 aa).

Topologically, residues 1–33 (MDPTTLVWGTESTTMNGNDQALPLLCGKETLIL) are extracellular. The helical transmembrane segment at 34–54 (VVLILFIALVGLVGNAFVLWL) threads the bilayer. The Cytoplasmic segment spans residues 55-63 (LGFRMRRNA). The helical transmembrane segment at 64–84 (FSVYVLSLAGADFLFLCFPMI) threads the bilayer. The Extracellular segment spans residues 85–96 (NCLAYLINFFHS). Residues 97–117 (ISINFPSFFTTVMTCAYLAGL) form a helical membrane-spanning segment. Residues 118–144 (SMLSAISTERCLSVLWPIWYRSRRPRH) are Cytoplasmic-facing. Residues 145-165 (LSAVMCVLLWALSLLLSILEG) traverse the membrane as a helical segment. The Extracellular segment spans residues 166–184 (KFCGFLFSDGDSGWCQTFD). A helical transmembrane segment spans residues 185–205 (FITAAWLMFLFVVLCGSSLAL). At 206–228 (LVRILCGSRGLPLTRLYLTILLT) the chain is on the cytoplasmic side. The helical transmembrane segment at 229 to 249 (VLIFLLCGLPFGIQWFLILWI) threads the bilayer. Over 250–264 (WKNSDVLFCHIHPVS) the chain is Extracellular. The helical transmembrane segment at 265–285 (VVLSSFNSSANPIIYFFVGSF) threads the bilayer. The Cytoplasmic portion of the chain corresponds to 286–330 (RKQWRLRQPVLKLALQRALQDTAEVDHSEGCFSQGTLEMSGSSLV).

The protein belongs to the G-protein coupled receptor 1 family. Mas subfamily.

It localises to the cell membrane. Mast cell-specific receptor for basic secretagogues, i.e. cationic amphiphilic drugs, as well as endo- or exogenous peptides, consisting of a basic head group and a hydrophobic core. Recognizes and binds small molecules containing a cyclized tetrahydroisoquinoline (THIQ), such as non-steroidal neuromuscular blocking drugs (NMBDs), including tubocurarine and atracurium. In response to these compounds, mediates pseudo-allergic reactions characterized by histamine release, inflammation and airway contraction. The protein is Mas-related G-protein coupled receptor member X2 (MRGPRX2) of Trachypithecus francoisi (Francois' leaf monkey).